Here is a 189-residue protein sequence, read N- to C-terminus: Thioredoxin-like protein CITRX, chloroplastic (189 aa).

The N-terminal 56 residues, 1–56 (MAMAAAASLLPASAAPTLPGRAFRPPRNSTPTASLSCDGGSRCRGVGLGVILGGCR), are a transit peptide targeting the chloroplast. The Thioredoxin domain maps to 72 to 189 (GSGKYIAPDY…MIRNIIDNEL (118 aa)). Active-site nucleophile residues include Cys112 and Cys115. Cys112 and Cys115 are disulfide-bonded.

The protein belongs to the thioredoxin family. Plant CITRX-type subfamily.

It is found in the plastid. It localises to the chloroplast. Its function is as follows. Probable thiol-disulfide oxidoreductase that may play a role in proper chloroplast development. The chain is Thioredoxin-like protein CITRX, chloroplastic from Oryza sativa subsp. japonica (Rice).